The primary structure comprises 162 residues: Putative pre-16S rRNA nuclease (162 aa).

Belongs to the YqgF nuclease family.

Its subcellular location is the cytoplasm. Functionally, could be a nuclease involved in processing of the 5'-end of pre-16S rRNA. The chain is Putative pre-16S rRNA nuclease from Brucella abortus (strain S19).